Here is a 143-residue protein sequence, read N- to C-terminus: uncharacterized protein (143 aa).

The tract at residues Met-1–Asp-21 is disordered.

This is an uncharacterized protein from Homo sapiens (Human).